The following is a 594-amino-acid chain: P-granule-associated novel protein 1 (594 aa).

The first 18 residues, 1–18 (MRSLLSFVLLALARIAIS), serve as a signal peptide directing secretion. Residues 19-513 (EETKSCIDIE…PEEEEVYRSG (495 aa)) lie on the Extracellular side of the membrane. LRR repeat units follow at residues 78 to 101 (GTEL…LFEN), 103 to 124 (FAKQ…SFQS), 125 to 149 (LGGS…LFTG), 150 to 173 (LKSL…AFEE), 175 to 197 (KKVE…TFDG), 198 to 221 (MKNL…AFRG), 222 to 245 (LNSL…IFSA), 246 to 269 (LKNL…SFPK), 271 to 290 (EKLV…KLKD), 291 to 315 (LPSL…MFGL), 318 to 341 (SDRI…AFQH), 343 to 365 (PNLI…SPSQ), 374 to 397 (LKKL…ELPK), 399 to 419 (LSSL…ALEG), and 420 to 442 (MEIK…TFDS). The helical transmembrane segment at 514–534 (WITVAATILTIVTIVIMVIIA) threads the bilayer. Residues 535 to 594 (MLYFKDARYQFPLRGRRSDSDLHKLIENDPLNIASDSILVVPAMPKRNTGPKKTVRFQNF) lie on the Cytoplasmic side of the membrane.

In terms of assembly, interacts with glh-1. Interacts (via LRR regions) with myrf-1 (via C-terminus); the interaction promotes the role of myrf-1 in the synaptic remodeling of DD GABAergic motor neurons at the cell membrane. In terms of tissue distribution, expressed in the germline and somatic cells. As to expression, expressed in the germline and somatic cells. Expressed at higher levels in germline cells relative to somatic cells. Expressed in germline cells. In terms of tissue distribution, highly expressed in the pharynx and at lower levels in the intestine, but not detected in other tissues. Other studies suggest a broader expression pattern in somatic tissues: from embryogenesis to adult stages, expressed strongly in body wall muscle, vulva, somatic gonad and pharynx, at lower levels in the nerve ring, hypodermis, and rectal epithelia, and very weakly in the intestine.

Its subcellular location is the cytoplasm. The protein localises to the apical cell membrane. Its function is as follows. Regulates diverse developmental processes including larval molting and gonad maturation. Functionally, promotes the localization of myrf-1 and myrf-2 to the cell membrane. In association with myrf-1, promotes the synaptic remodeling of DD GABAergic motor neurons whereby new synapses form in the dorsal processes of DD neurons. The chain is P-granule-associated novel protein 1 from Caenorhabditis elegans.